A 270-amino-acid chain; its full sequence is 4-hydroxy-tetrahydrodipicolinate reductase (270 aa).

NAD(+) contacts are provided by residues 9-14 and Glu35; that span reads GAGGRM. Arg36 is an NADP(+) binding site. NAD(+) contacts are provided by residues 99–101 and 123–126; these read GTT and ASNY. The Proton donor/acceptor role is filled by His156. His157 lines the (S)-2,3,4,5-tetrahydrodipicolinate pocket. The Proton donor role is filled by Lys160. (S)-2,3,4,5-tetrahydrodipicolinate is bound at residue 166 to 167; the sequence is GT.

Belongs to the DapB family.

The protein resides in the cytoplasm. The catalysed reaction is (S)-2,3,4,5-tetrahydrodipicolinate + NAD(+) + H2O = (2S,4S)-4-hydroxy-2,3,4,5-tetrahydrodipicolinate + NADH + H(+). It catalyses the reaction (S)-2,3,4,5-tetrahydrodipicolinate + NADP(+) + H2O = (2S,4S)-4-hydroxy-2,3,4,5-tetrahydrodipicolinate + NADPH + H(+). It functions in the pathway amino-acid biosynthesis; L-lysine biosynthesis via DAP pathway; (S)-tetrahydrodipicolinate from L-aspartate: step 4/4. In terms of biological role, catalyzes the conversion of 4-hydroxy-tetrahydrodipicolinate (HTPA) to tetrahydrodipicolinate. This is 4-hydroxy-tetrahydrodipicolinate reductase from Actinobacillus succinogenes (strain ATCC 55618 / DSM 22257 / CCUG 43843 / 130Z).